The chain runs to 233 residues: Large ribosomal subunit protein uL1 (233 aa).

Belongs to the universal ribosomal protein uL1 family. In terms of assembly, part of the 50S ribosomal subunit.

Its function is as follows. Binds directly to 23S rRNA. The L1 stalk is quite mobile in the ribosome, and is involved in E site tRNA release. In terms of biological role, protein L1 is also a translational repressor protein, it controls the translation of the L11 operon by binding to its mRNA. The polypeptide is Large ribosomal subunit protein uL1 (Brucella suis (strain ATCC 23445 / NCTC 10510)).